The chain runs to 276 residues: Short-chain dehydrogenase anuF (276 aa).

Ile-18, Asp-68, Lys-130, Tyr-176, Lys-180, Val-209, and Thr-211 together coordinate NADP(+). Tyr-176 serves as the catalytic Proton acceptor. Tyr-176 serves as the catalytic Proton donor. Lys-180 functions as the Lowers pKa of active site Tyr in the catalytic mechanism.

It belongs to the short-chain dehydrogenases/reductases (SDR) family.

The enzyme catalyses (2R,9S)-annullatin H + A = (2R)-annullatin F + AH2. Its function is as follows. Cytochrome P450 monooxygenase; part of the gene cluster that mediates the biosynthesis of annullatin D, an alkylated aromatic polyketide with a fused dihydrobenzofuran lactone ring system that exhibits potent agonistic activities toward the cannabinoid receptors. Within the pathway, anuF is involved in the formation of (2R)-annullatin F from the diastereomer of (2S,9S)-annullatin H (compound 12). The annullatin backbone 2-hydroxymethyl-3-pentylphenol is assembled from one acetyl-CoA starter unit and 5 malonyl-CoA elongation units by cooperation of the highly reducing polyketide synthase anuA, the short-chain dehydrogenase anuB and the oxidoreductase anuC, before being hydroxylated at the C-5 alkyl chain by the cytochrome P450 monooxygenase anuE to form (8S)-annullatin E. The prenyltransferase anuH subsequently installs one isoprenyl group at the benzene ring to form (8S)-annullatin J. Enzymatic or nonenzymatic dihydro-benzofuran ring formation between the prenyl and the phenolic hydroxyl groups in (8S)-annullatin J results in two diastereomers (2S,9S)-annullatin H and compound 12. The intermediate (2S,9S)-annullatin H is then converted to (2S,9S)-annullatin D by the FAD-linked oxidoreductase anuG-catalyzed five-member lactone ring formation. The isomer 12 acts as a substrate for the short-chain dehydrogenase anuF and is oxidized to (2R)-annullatin F, which is subsequently acetylated by an acetyltransferase leading to (2R)-annullatin G formation. The remaining enzymes identified within the cluster, anuD, anuI and anuJ, seem not to be involved in annullatin biosynthesis. This chain is Short-chain dehydrogenase anuF, found in Penicillium roqueforti (strain FM164).